The sequence spans 779 residues: Phosphoribosylformylglycinamidine synthase subunit PurL (779 aa).

The active site involves H52. Residues Y55 and K94 each coordinate ATP. E96 serves as a coordination point for Mg(2+). Substrate is bound by residues 97–100 (SHNH) and R119. H98 (proton acceptor) is an active-site residue. D120 serves as a coordination point for Mg(2+). Q243 is a binding site for substrate. D271 lines the Mg(2+) pocket. 315–317 (ESQ) is a binding site for substrate. N523 and G560 together coordinate ATP. Position 561 (N561) interacts with Mg(2+). S563 contributes to the substrate binding site.

The protein belongs to the FGAMS family. In terms of assembly, monomer. Part of the FGAM synthase complex composed of 1 PurL, 1 PurQ and 2 PurS subunits.

The protein resides in the cytoplasm. It catalyses the reaction N(2)-formyl-N(1)-(5-phospho-beta-D-ribosyl)glycinamide + L-glutamine + ATP + H2O = 2-formamido-N(1)-(5-O-phospho-beta-D-ribosyl)acetamidine + L-glutamate + ADP + phosphate + H(+). It participates in purine metabolism; IMP biosynthesis via de novo pathway; 5-amino-1-(5-phospho-D-ribosyl)imidazole from N(2)-formyl-N(1)-(5-phospho-D-ribosyl)glycinamide: step 1/2. In terms of biological role, part of the phosphoribosylformylglycinamidine synthase complex involved in the purines biosynthetic pathway. Catalyzes the ATP-dependent conversion of formylglycinamide ribonucleotide (FGAR) and glutamine to yield formylglycinamidine ribonucleotide (FGAM) and glutamate. The FGAM synthase complex is composed of three subunits. PurQ produces an ammonia molecule by converting glutamine to glutamate. PurL transfers the ammonia molecule to FGAR to form FGAM in an ATP-dependent manner. PurS interacts with PurQ and PurL and is thought to assist in the transfer of the ammonia molecule from PurQ to PurL. In Prochlorococcus marinus subsp. pastoris (strain CCMP1986 / NIES-2087 / MED4), this protein is Phosphoribosylformylglycinamidine synthase subunit PurL.